Consider the following 122-residue polypeptide: LYR motif-containing protein 1 (122 aa).

The protein belongs to the complex I LYR family.

Its function is as follows. May promote cell proliferation and inhibition of apoptosis of preadipocytes. The polypeptide is LYR motif-containing protein 1 (Lyrm1) (Rattus norvegicus (Rat)).